We begin with the raw amino-acid sequence, 1570 residues long: Vacuolar protein sorting/targeting protein 10 (1570 aa).

The signal sequence occupies residues Met-1 to Ser-24. The Lumenal portion of the chain corresponds to Glu-25–Ser-1390. 3 BNR repeats span residues Ile-63–Lys-72, Tyr-105–Lys-116, and Trp-463–Asp-473. Asn-503 is a glycosylation site (N-linked (GlcNAc...) asparagine). BNR repeat units lie at residues Tyr-508 to Glu-518, Tyr-801 to Lys-812, and Tyr-858 to Lys-869. The N-linked (GlcNAc...) asparagine glycan is linked to Asn-1009. BNR repeat units lie at residues Phe-1138 to Lys-1148 and Met-1179 to His-1189. A glycan (N-linked (GlcNAc...) asparagine) is linked at Asn-1299. A helical membrane pass occupies residues Gly-1391–Val-1411. Residues Tyr-1412–Asn-1570 lie on the Cytoplasmic side of the membrane. The disordered stretch occupies residues Glu-1517–Asn-1570. Composition is skewed to acidic residues over residues Asp-1529 to Glu-1546 and Asp-1556 to Asn-1570.

The protein belongs to the VPS10-related sortilin family.

It localises to the golgi apparatus. Its subcellular location is the trans-Golgi network membrane. The protein localises to the prevacuolar compartment membrane. Its function is as follows. Functions as a sorting receptor in the Golgi compartment required for the intracellular sorting and delivery of soluble vacuolar proteins, like carboxypeptidase Y (CPY) and proteinase A. Executes multiple rounds of sorting by cycling between the late Golgi and a prevacuolar endosome-like compartment. The chain is Vacuolar protein sorting/targeting protein 10 (VPS10) from Debaryomyces hansenii (strain ATCC 36239 / CBS 767 / BCRC 21394 / JCM 1990 / NBRC 0083 / IGC 2968) (Yeast).